We begin with the raw amino-acid sequence, 552 residues long: Non-structural protein NS1 (552 aa).

The protein belongs to the orbivirus non-structural protein NS1 family.

In Antilocapra americana (Pronghorn), this protein is Non-structural protein NS1 (Segment-5).